The sequence spans 694 residues: Lamina-associated polypeptide 2, isoform alpha (694 aa).

In terms of domain architecture, LEM-like spans 5 to 48 (LEDPSVLTKDKLKSELVANNVTLPAGEQRKDVYVQLYLQHLTAR). Disordered regions lie at residues 47-117 (ARNR…ELTN) and 150-209 (REQG…FSEL). Positions 49–108 (NRPPLPAGTNSKGPPDFSSDEEREPTPVLGSGAAAAGRSRAAVGRKATKKTDKPRQEDKD) are linker. Thr57 is modified (phosphothreonine). A phosphoserine mark is found at Ser59, Ser66, and Ser67. At Thr74 the chain carries Phosphothreonine. Positions 78-93 (GSGAAAAGRSRAAVGR) are enriched in low complexity. A Phosphoserine modification is found at Ser79. An omega-N-methylarginine mark is found at Arg86 and Arg88. Over residues 97–106 (KKTDKPRQED) the composition is skewed to basic and acidic residues. Positions 107–117 (KDDLDVTELTN) are enriched in acidic residues. An LEM domain is found at 109-153 (DLDVTELTNEDLLDQLVKYGVNPGPIVGTTRKLYEKKLLKLREQG). Thr154 is modified (phosphothreonine). Over residues 155 to 178 (ESRSSTPLPTISSSAENTRQNGSN) the composition is skewed to polar residues. Phosphoserine occurs at positions 156 and 159. Residues Thr160 and Thr164 each carry the phosphothreonine modification. 2 positions are modified to phosphoserine: Ser166 and Ser168. Over residues 179–191 (DSDRYSDNEEGKK) the composition is skewed to basic and acidic residues. Positions 190-196 (KKKEHKK) match the Nuclear localization signal motif. Phosphoserine occurs at positions 272, 312, 351, 354, 370, and 424. Residues 338–368 (QPLCPERSHISDQSPLSSKRKALEESESSQL) form a disordered region. Residues 558–657 (TESCNQQLDL…VGRRYLWLKD (100 aa)) adopt a coiled-coil conformation. Lys656 is modified (N6-acetyllysine).

This sequence belongs to the LEM family. In terms of assembly, interacts with LMNA, BANF1 and RB1 and with chromosomes. Associates directly or indirectly with lamins at specific cell-cycle stages. Interacts with CMTM6. Phosphorylated in a mitose-specific manner. As to expression, expressed in many tissues. Most abundant in adult thymus and fetal liver.

The protein resides in the nucleus. The protein localises to the chromosome. May be involved in the structural organization of the nucleus and in the post-mitotic nuclear assembly. Plays an important role, together with LMNA, in the nuclear anchorage of RB1. Its function is as follows. TP and TP5 may play a role in T-cell development and function. TP5 is an immunomodulating pentapeptide. This is Lamina-associated polypeptide 2, isoform alpha (TMPO) from Homo sapiens (Human).